A 207-amino-acid polypeptide reads, in one-letter code: Superoxide dismutase [Mn] (207 aa).

Positions 27, 82, 169, and 173 each coordinate Mn(2+).

Belongs to the iron/manganese superoxide dismutase family. Mn(2+) is required as a cofactor.

The enzyme catalyses 2 superoxide + 2 H(+) = H2O2 + O2. Functionally, destroys superoxide anion radicals which are normally produced within the cells and which are toxic to biological systems. The polypeptide is Superoxide dismutase [Mn] (sodA) (Yersinia enterocolitica).